We begin with the raw amino-acid sequence, 615 residues long: DNA mismatch repair protein MutL (615 aa).

A compositionally biased stretch (low complexity) spans 378–391; the sequence is PAPASGSRPAAPWP. The segment at 378–397 is disordered; that stretch reads PAPASGSRPAAPWPNAQPGY.

It belongs to the DNA mismatch repair MutL/HexB family.

Its function is as follows. This protein is involved in the repair of mismatches in DNA. It is required for dam-dependent methyl-directed DNA mismatch repair. May act as a 'molecular matchmaker', a protein that promotes the formation of a stable complex between two or more DNA-binding proteins in an ATP-dependent manner without itself being part of a final effector complex. This Escherichia coli O127:H6 (strain E2348/69 / EPEC) protein is DNA mismatch repair protein MutL.